Reading from the N-terminus, the 294-residue chain is Acetyl-coenzyme A carboxylase carboxyl transferase subunit beta (294 aa).

The CoA carboxyltransferase N-terminal domain maps to 25–294; it reads VWTKCTACEQ…PFLEPEIIAD (270 aa). 4 residues coordinate Zn(2+): Cys29, Cys32, Cys48, and Cys51. The segment at 29-51 adopts a C4-type zinc-finger fold; it reads CTACEQVLYRDELKRHLEVCPKC.

The protein belongs to the AccD/PCCB family. In terms of assembly, acetyl-CoA carboxylase is a heterohexamer composed of biotin carboxyl carrier protein (AccB), biotin carboxylase (AccC) and two subunits each of ACCase subunit alpha (AccA) and ACCase subunit beta (AccD). Zn(2+) serves as cofactor.

It is found in the cytoplasm. The catalysed reaction is N(6)-carboxybiotinyl-L-lysyl-[protein] + acetyl-CoA = N(6)-biotinyl-L-lysyl-[protein] + malonyl-CoA. Its pathway is lipid metabolism; malonyl-CoA biosynthesis; malonyl-CoA from acetyl-CoA: step 1/1. Component of the acetyl coenzyme A carboxylase (ACC) complex. Biotin carboxylase (BC) catalyzes the carboxylation of biotin on its carrier protein (BCCP) and then the CO(2) group is transferred by the transcarboxylase to acetyl-CoA to form malonyl-CoA. The sequence is that of Acetyl-coenzyme A carboxylase carboxyl transferase subunit beta from Actinobacillus succinogenes (strain ATCC 55618 / DSM 22257 / CCUG 43843 / 130Z).